The primary structure comprises 303 residues: Mycothiol acetyltransferase (303 aa).

N-acetyltransferase domains are found at residues 3–152 and 155–303; these read VTVT…VSLP and VRIR…MYRS. Aspartate 35 serves as a coordination point for 1D-myo-inositol 2-(L-cysteinylamino)-2-deoxy-alpha-D-glucopyranoside. Residue 79-81 coordinates acetyl-CoA; that stretch reads LTV. 1D-myo-inositol 2-(L-cysteinylamino)-2-deoxy-alpha-D-glucopyranoside-binding residues include glutamate 182, lysine 224, and glutamate 237. Residues 241–243 and 248–254 contribute to the acetyl-CoA site; these read VGV and QGSGLGR. Tyrosine 275 lines the 1D-myo-inositol 2-(L-cysteinylamino)-2-deoxy-alpha-D-glucopyranoside pocket.

The protein belongs to the acetyltransferase family. MshD subfamily. In terms of assembly, monomer.

The catalysed reaction is 1D-myo-inositol 2-(L-cysteinylamino)-2-deoxy-alpha-D-glucopyranoside + acetyl-CoA = mycothiol + CoA + H(+). In terms of biological role, catalyzes the transfer of acetyl from acetyl-CoA to desacetylmycothiol (Cys-GlcN-Ins) to form mycothiol. The sequence is that of Mycothiol acetyltransferase from Kocuria rhizophila (strain ATCC 9341 / DSM 348 / NBRC 103217 / DC2201).